The primary structure comprises 254 residues: Cytokine-inducible SH2-containing protein (254 aa).

Residues 82–188 enclose the SH2 domain; sequence WYWGSITASE…ATTPALPTPK (107 aa). The tract at residues 171–195 is disordered; the sequence is TRSDSPDLATTPALPTPKEDAPGDP. In terms of domain architecture, SOCS box spans 205–253; it reads KLVQPFVRRSSTRSLQHLCRLVINRLVVDVDCLPLPRRMADYLRQYPFQ.

In terms of assembly, stably associated with the tyrosine-phosphorylated IL3 receptor beta chain and tyrosine-phosphorylated EPO receptor (EPOR).

The protein operates within protein modification; protein ubiquitination. Functionally, SOCS family proteins form part of a classical negative feedback system that regulates cytokine signal transduction. CIS is involved in the negative regulation of cytokines that signal through the JAK-STAT5 pathway such as erythropoietin, prolactin and interleukin 3 (IL3) receptor. Inhibits STAT5 trans-activation by suppressing its tyrosine phosphorylation. May be a substrate recognition component of a SCF-like ECS (Elongin BC-CUL2/5-SOCS-box protein) E3 ubiquitin-protein ligase complex which mediates the ubiquitination and subsequent proteasomal degradation of target proteins. The polypeptide is Cytokine-inducible SH2-containing protein (CISH) (Bos taurus (Bovine)).